A 265-amino-acid chain; its full sequence is Protein synthesis inhibitor PD-S2 (265 aa).

Intrachain disulfides connect Cys-34-Cys-262 and Cys-88-Cys-110. The N-linked (GlcNAc...) asparagine glycan is linked to Asn-120.

The protein belongs to the ribosome-inactivating protein family. Type 1 RIP subfamily. Glycosylated. Seeds.

The enzyme catalyses Endohydrolysis of the N-glycosidic bond at one specific adenosine on the 28S rRNA.. Inhibits protein synthesis in animal cells. Useful as immunotoxin for pharmacological applications. The chain is Protein synthesis inhibitor PD-S2 from Phytolacca dioica (Bella sombra tree).